The following is a 688-amino-acid chain: Soluble guanylate cyclase gcy-35 (688 aa).

A heme-binding site is contributed by histidine 105. Positions leucine 358–methionine 401 form a coiled coil. The region spanning threonine 424–glutamate 552 is the Guanylate cyclase domain. Mg(2+) is bound by residues aspartate 429 and aspartate 473. Positions valine 644 to serine 688 are disordered. A compositionally biased stretch (low complexity) spans asparagine 646–asparagine 659.

Belongs to the adenylyl cyclase class-4/guanylyl cyclase family. As to quaternary structure, heterodimer; heterodimerizes with gcy-36, and possibly with other soluble guanylate cyclases. Heme is required as a cofactor. As to expression, expressed in URX, AQR and PQR neurons. Also expressed in ALN, SDQ and BDU neurons, and variably in AVM, PLM and PLN neurons, pharyngeal and body wall muscles, and the excretory cell.

It localises to the cytoplasm. The protein localises to the cell projection. Its subcellular location is the dendrite. It carries out the reaction GTP = 3',5'-cyclic GMP + diphosphate. With respect to regulation, regulated by molecular oxygen, which binds to the heme binding site. Probably not activated by nitric oxide (NO). In terms of biological role, plays a central role in social feeding behavior and oxygen sensation by synthesizing 3',5'-cyclic guanosine monophosphate (cGMP) from GTP. Oxygen, which binds to its heme-binding sites, probably regulates social behavior by modulating its activity. cGMP is a common second messenger in sensory transduction and is implicated in oxygen sensation. Indeed, C.elegans exhibits a strong behavioral preference for 5-12% oxygen, avoiding higher and lower oxygen levels; a higher level of oxygen inducing a naturally polymorphic social feeding behavior. Involved in avoidance of hyperoxia and for oxygen-induced aggregation and bordering, probably by mediating oxygen-sensing in URX, AQR and PQR sensory neurons. This chain is Soluble guanylate cyclase gcy-35 (gcy-35), found in Caenorhabditis elegans.